The sequence spans 283 residues: Pantothenate synthetase (283 aa).

30-37 is an ATP binding site; sequence MGNLHDGH. The active-site Proton donor is histidine 37. Glutamine 61 provides a ligand contact to (R)-pantoate. Glutamine 61 serves as a coordination point for beta-alanine. Residue 149–152 participates in ATP binding; it reads GEKD. Glutamine 155 lines the (R)-pantoate pocket. Residues valine 178 and 186–189 contribute to the ATP site; that span reads LSSR.

The protein belongs to the pantothenate synthetase family. As to quaternary structure, homodimer.

The protein resides in the cytoplasm. It catalyses the reaction (R)-pantoate + beta-alanine + ATP = (R)-pantothenate + AMP + diphosphate + H(+). Its pathway is cofactor biosynthesis; (R)-pantothenate biosynthesis; (R)-pantothenate from (R)-pantoate and beta-alanine: step 1/1. Catalyzes the condensation of pantoate with beta-alanine in an ATP-dependent reaction via a pantoyl-adenylate intermediate. This chain is Pantothenate synthetase, found in Salmonella arizonae (strain ATCC BAA-731 / CDC346-86 / RSK2980).